The primary structure comprises 649 residues: Mitochondrial Rho GTPase 1 (649 aa).

At 1-623 (MTKETIRVVI…KPTNIDYSSA (623 aa)) the chain is on the cytoplasmic side. The Miro 1 domain maps to 3–176 (KETIRVVICG…FYLCQRSISY (174 aa)). GTP is bound by residues 12–19 (GDDGVGKT), 61–63 (DTD), and 115–118 (NKCD). EF-hand domains are found at residues 192–227 (SAVA…CFGK) and 320–355 (KGYR…TPGL). Residues aspartate 205, aspartate 207, aspartate 209, glutamate 216, aspartate 333, aspartate 335, aspartate 337, and glutamate 344 each coordinate Ca(2+). Residues 436–601 (RKVFNCFVVG…FKKIIQASLE (166 aa)) form the Miro 2 domain. GTP-binding positions include 445–452 (GKRNSGKS), 481–485 (EVTGD), and 550–553 (LKAD). Residues 624-644 (VILGSSIGFLALFSYTMIKLL) form a helical; Anchor for type IV membrane protein membrane-spanning segment. Residues 645–649 (KPTQQ) are Mitochondrial intermembrane-facing.

Belongs to the mitochondrial Rho GTPase family.

Its subcellular location is the mitochondrion outer membrane. In terms of biological role, mitochondrial GTPase involved in mitochondrial trafficking. Probably involved in control of anterograde transport of mitochondria and their subcellular distribution. This Candida glabrata (strain ATCC 2001 / BCRC 20586 / JCM 3761 / NBRC 0622 / NRRL Y-65 / CBS 138) (Yeast) protein is Mitochondrial Rho GTPase 1 (GEM1).